Consider the following 414-residue polypeptide: Putative truncated GMC-type inactive oxidoreductase R832 (414 aa).

Positions 1 to 20 (MNPTKLFLVFVAFAFAIINA) are cleaved as a signal peptide. An FAD-binding site is contributed by 38-67 (DYIIVGSGPGGSRAVQQCIAKGHKCTLVER).

This sequence belongs to the GMC oxidoreductase family. Requires FAD as cofactor.

The protein is Putative truncated GMC-type inactive oxidoreductase R832 of Acanthamoeba polyphaga (Amoeba).